The primary structure comprises 264 residues: 3-methyl-2-oxobutanoate hydroxymethyltransferase (264 aa).

The Mg(2+) site is built by D46 and D85. 3-methyl-2-oxobutanoate-binding positions include 46 to 47 (DS), D85, and K113. Position 115 (E115) interacts with Mg(2+). E181 (proton acceptor) is an active-site residue.

The protein belongs to the PanB family. As to quaternary structure, homodecamer; pentamer of dimers. It depends on Mg(2+) as a cofactor.

It is found in the cytoplasm. It carries out the reaction 3-methyl-2-oxobutanoate + (6R)-5,10-methylene-5,6,7,8-tetrahydrofolate + H2O = 2-dehydropantoate + (6S)-5,6,7,8-tetrahydrofolate. Its pathway is cofactor biosynthesis; (R)-pantothenate biosynthesis; (R)-pantoate from 3-methyl-2-oxobutanoate: step 1/2. In terms of biological role, catalyzes the reversible reaction in which hydroxymethyl group from 5,10-methylenetetrahydrofolate is transferred onto alpha-ketoisovalerate to form ketopantoate. The chain is 3-methyl-2-oxobutanoate hydroxymethyltransferase from Salmonella typhi.